A 146-amino-acid chain; its full sequence is Anti-sigma F factor (146 aa).

The protein belongs to the anti-sigma-factor family.

It carries out the reaction L-seryl-[protein] + ATP = O-phospho-L-seryl-[protein] + ADP + H(+). It catalyses the reaction L-threonyl-[protein] + ATP = O-phospho-L-threonyl-[protein] + ADP + H(+). In terms of biological role, binds to sigma F and blocks its ability to form an RNA polymerase holoenzyme (E-sigma F). Phosphorylates SpoIIAA on a serine residue. This phosphorylation may enable SpoIIAA to act as an anti-anti-sigma factor that counteracts SpoIIAB and thus releases sigma F from inhibition. This Geobacillus kaustophilus (strain HTA426) protein is Anti-sigma F factor.